We begin with the raw amino-acid sequence, 55 residues long: ATP synthase F(0) complex subunit 8 (55 aa).

A helical transmembrane segment spans residues 7–24 (NPWFYIMLMSWLTFSLII). Positions 35–55 (NPPSNKTSTTTRTLPWTWPWT) are disordered. Low complexity predominate over residues 41–55 (TSTTTRTLPWTWPWT).

The protein belongs to the ATPase protein 8 family. Component of the ATP synthase complex composed at least of ATP5F1A/subunit alpha, ATP5F1B/subunit beta, ATP5MC1/subunit c (homooctomer), MT-ATP6/subunit a, MT-ATP8/subunit 8, ATP5ME/subunit e, ATP5MF/subunit f, ATP5MG/subunit g, ATP5MK/subunit k, ATP5MJ/subunit j, ATP5F1C/subunit gamma, ATP5F1D/subunit delta, ATP5F1E/subunit epsilon, ATP5PF/subunit F6, ATP5PB/subunit b, ATP5PD/subunit d, ATP5PO/subunit OSCP. ATP synthase complex consists of a soluble F(1) head domain (subunits alpha(3) and beta(3)) - the catalytic core - and a membrane F(0) domain - the membrane proton channel (subunits c, a, 8, e, f, g, k and j). These two domains are linked by a central stalk (subunits gamma, delta, and epsilon) rotating inside the F1 region and a stationary peripheral stalk (subunits F6, b, d, and OSCP).

The protein resides in the mitochondrion membrane. Subunit 8, of the mitochondrial membrane ATP synthase complex (F(1)F(0) ATP synthase or Complex V) that produces ATP from ADP in the presence of a proton gradient across the membrane which is generated by electron transport complexes of the respiratory chain. ATP synthase complex consist of a soluble F(1) head domain - the catalytic core - and a membrane F(1) domain - the membrane proton channel. These two domains are linked by a central stalk rotating inside the F(1) region and a stationary peripheral stalk. During catalysis, ATP synthesis in the catalytic domain of F(1) is coupled via a rotary mechanism of the central stalk subunits to proton translocation. In vivo, can only synthesize ATP although its ATP hydrolase activity can be activated artificially in vitro. Part of the complex F(0) domain. This Corythaixoides concolor (Grey go-away-bird) protein is ATP synthase F(0) complex subunit 8.